The following is a 292-amino-acid chain: GTP cyclohydrolase FolE2 (292 aa).

It belongs to the GTP cyclohydrolase IV family.

The enzyme catalyses GTP + H2O = 7,8-dihydroneopterin 3'-triphosphate + formate + H(+). It participates in cofactor biosynthesis; 7,8-dihydroneopterin triphosphate biosynthesis; 7,8-dihydroneopterin triphosphate from GTP: step 1/1. Functionally, converts GTP to 7,8-dihydroneopterin triphosphate. This chain is GTP cyclohydrolase FolE2, found in Staphylococcus aureus (strain Mu50 / ATCC 700699).